The sequence spans 197 residues: RILP-like protein 2 (197 aa).

Residues 1 to 24 (MEDHPVREEEDGEEDEGALAKSPL) are disordered. A compositionally biased stretch (acidic residues) spans 8 to 17 (EEEDGEEDEG). In terms of domain architecture, RH1 spans 14-96 (EDEGALAKSP…KQEVEGLRKA (83 aa)). Residues 69 to 153 (VNEGSLAVEE…VQEELQCYRS (85 aa)) are a coiled coil. The RH2 domain maps to 119 to 184 (RPRFTLQELR…GNGEKEERTI (66 aa)).

It belongs to the RILPL family. In terms of assembly, homodimer. Interacts with RAC1. Interacts (via N-terminus) with MYO5A, the interaction is required for its role in dendrite formation. Interacts with RAB8A; interaction is dependent on the phosphorylation of RAB8A on 'Thr-72'. Interacts with RAB10 and RAB12; interaction is dependent on the phosphorylation of 'Thr-73' on RAB10 and 'Ser-105' on RAB12.

The protein resides in the cytoplasm. Its subcellular location is the cytosol. It is found in the cytoskeleton. The protein localises to the microtubule organizing center. It localises to the centrosome. The protein resides in the cell projection. Its subcellular location is the cilium. In terms of biological role, involved in cell shape and neuronal morphogenesis, positively regulating the establishment and maintenance of dendritic spines. Plays a role in cellular protein transport, including protein transport away from primary cilia. May function via activation of RAC1 and PAK1. In Mus musculus (Mouse), this protein is RILP-like protein 2 (Rilpl2).